The primary structure comprises 155 residues: 6,7-dimethyl-8-ribityllumazine synthase (155 aa).

Residues Trp-22, 56 to 58 (SFE), and 80 to 82 (AVI) each bind 5-amino-6-(D-ribitylamino)uracil. 85-86 (AT) is a binding site for (2S)-2-hydroxy-3-oxobutyl phosphate. The active-site Proton donor is His-88. Position 113 (Phe-113) interacts with 5-amino-6-(D-ribitylamino)uracil. Arg-127 provides a ligand contact to (2S)-2-hydroxy-3-oxobutyl phosphate.

This sequence belongs to the DMRL synthase family.

It catalyses the reaction (2S)-2-hydroxy-3-oxobutyl phosphate + 5-amino-6-(D-ribitylamino)uracil = 6,7-dimethyl-8-(1-D-ribityl)lumazine + phosphate + 2 H2O + H(+). It functions in the pathway cofactor biosynthesis; riboflavin biosynthesis; riboflavin from 2-hydroxy-3-oxobutyl phosphate and 5-amino-6-(D-ribitylamino)uracil: step 1/2. Functionally, catalyzes the formation of 6,7-dimethyl-8-ribityllumazine by condensation of 5-amino-6-(D-ribitylamino)uracil with 3,4-dihydroxy-2-butanone 4-phosphate. This is the penultimate step in the biosynthesis of riboflavin. This is 6,7-dimethyl-8-ribityllumazine synthase from Chloroflexus aurantiacus (strain ATCC 29364 / DSM 637 / Y-400-fl).